The primary structure comprises 559 residues: MILKSSIDRLLQTIDIVEVISSYVDLRKSGSNYMACCPFHEERSASFSVNQVKGFYYCFGCGASGDSIKFVMAFEKLSFVEALEKLAHRFNIALEYDKGVYYDHKEDYHLLEMVSSLYQEELFNAPFFLNYLQKRGLSMESIKAFKLGLCTNKIDYGIENKGLNKDKLIELGVLGKSDKEDKTYLRFLDRIMFPIYSPSAQVVGFGGRTLKEKAAKYINSPQNKLFDKSSLLYGYHLAKEHIYKQKQVIVTEGYLDVILLHQAGFKNAIATLGTALTPSHLPLLKKGDPEILLSYDGDKAGRNAAYKASLMLAKEQRKGGVILFENNLDPADMIANHQIETLKNWLSRPIAFIEFVLRHMAGSYLLDDPLEKDKALKEMLGFLKNFSLLLQNEYKPLIATLLQAPLHVLGIREPVSFQPFYPKTEKPNRPQKFAHVSSMPSLEFLEKLVIRYLLEDRSLLDLAVGYIHSGVFLHKKQEFDALCQEKLDDPKLVALLLDANLPLKKGGFEKELRLLILRYFERQLKEIPKSPLSFSEKMIFLKRARQAIMKLKQGELVAI.

A CHC2-type zinc finger spans residues 37-61; the sequence is CPFHEERSASFSVNQVKGFYYCFGC. One can recognise a Toprim domain in the interval 246 to 327; it reads KQVIVTEGYL…KGGVILFENN (82 aa). Mg(2+)-binding residues include E252, D296, and D298.

The protein belongs to the DnaG primase family. In terms of assembly, monomer. Interacts with DnaB. The cofactor is Zn(2+). Mg(2+) serves as cofactor.

The catalysed reaction is ssDNA + n NTP = ssDNA/pppN(pN)n-1 hybrid + (n-1) diphosphate.. Functionally, RNA polymerase that catalyzes the synthesis of short RNA molecules used as primers for DNA polymerase during DNA replication. This Helicobacter pylori (strain J99 / ATCC 700824) (Campylobacter pylori J99) protein is DNA primase.